A 533-amino-acid polypeptide reads, in one-letter code: Adenylate kinase 7 (533 aa).

Residues 177-426 form an adenylate kinase region; sequence PVKICILGPP…EPRNYGLTDE (250 aa). Residue 187 to 192 coordinates ATP; sequence AVGKSS. An NMP region spans residues 207-265; sequence QLKDVISEAIAKLETIVAPKDIGEGKEEVEEEEEEENVEDAQELLDGIKESMEQNAGQL. Residues 242-265, 292-295, and Q299 contribute to the AMP site; these read ENVE…AGQL and GFPK. The LID stretch occupies residues 347–357; it reads NLPERIVAGTH. R365 contacts AMP. ATP is bound at residue G397. Residues 419–487 are a coiled coil; the sequence is RNYGLTDEEK…EERELLEAQS (69 aa). Positions 489-533 are DPY-30; the sequence is PLRNYLMTYVMPTLIQGLNECCNVRPEDPVDFLAEYLFKNNPEAQ.

In the central section; belongs to the adenylate kinase family. The protein in the C-terminal section; belongs to the dpy-30 family.

It localises to the cytoplasm. It is found in the cytosol. The protein resides in the cell projection. The protein localises to the cilium. Its subcellular location is the flagellum. It catalyses the reaction AMP + ATP = 2 ADP. The enzyme catalyses a 2'-deoxyribonucleoside 5'-diphosphate + ATP = a 2'-deoxyribonucleoside 5'-triphosphate + ADP. It carries out the reaction a ribonucleoside 5'-diphosphate + ATP = a ribonucleoside 5'-triphosphate + ADP. Its function is as follows. Nucleoside monophosphate (NMP) kinase that catalyzes the reversible transfer of the terminal phosphate group between nucleoside triphosphates and monophosphates. Has highest activity toward AMP, and weaker activity toward dAMP, CMP and dCMP. Also displays broad nucleoside diphosphate kinase activity. Involved in maintaining ciliary structure and function. The chain is Adenylate kinase 7 (AK7) from Macaca fascicularis (Crab-eating macaque).